A 644-amino-acid chain; its full sequence is MFDIRKYPQALAVSQSAALTPEDYRRLYRQSVEDPDTFWAEQAKRLDWIKPWSSVQQCDLHTGKARWFDGAQLNVSYNCIDRHLAQRGEQTALLWEGDDPKDSKAITYRELHRQVCRLANAMKARGVKKGDRVSIYMPMIPEAAFAMLACTRIGAIHSVVFGGFSPDALRDRILDADCRTVITADEGVRGGKRIPLKQNVDKALASCPAVSSVLVVRRTGGDVAWTEGRDLWYHEATKDAGDDCPPEPMEAEDPLFILYTSGSTGKPKGVLHTTGGYLLQATMTFKVVFDYRDGEVFWCTADVGWVTGHSYIVYGPLANGAISLMFEGVPNYPDTSRFWQVVDKHQVNIFYTAPTALRALMREGSAPLQSTSRKSLRLLGSVGEPINPEAWEWYFEEVGQKRCPIVDTWWQTETGGIMLTPLPGTQSLKPGCATQPMFGVQPVLLDEKGKLIEGPGAGVLAIKASWPGQIRSVYGDHQRMVDTYFKPLPGYYFTGDGARRDADGDYWITGRIDDVINVSGHRIGTAEVESALVLHDSVAEAAVVGYPHDLKGQGVYAFVTTMNGVTPDDTLKAELLALVSKEIGSFAKPELIQWAPALPKTRSGKIMRRILRKIACNELENLGDTSTLADPSVVQGLIDKRLNQ.

Residues 189–192, Thr-307, and Asn-331 contribute to the CoA site; that span reads RGGK. ATP contacts are provided by residues 383–385, 407–412, Asp-496, and Arg-511; these read GEP and DTWWQT. Ser-519 provides a ligand contact to CoA. Arg-522 contacts ATP. Mg(2+) is bound by residues Val-533, His-535, and Val-538. Lys-605 is subject to N6-acetyllysine.

The protein belongs to the ATP-dependent AMP-binding enzyme family. Mg(2+) serves as cofactor. Post-translationally, acetylated. Deacetylation by the SIR2-homolog deacetylase activates the enzyme.

It carries out the reaction acetate + ATP + CoA = acetyl-CoA + AMP + diphosphate. Catalyzes the conversion of acetate into acetyl-CoA (AcCoA), an essential intermediate at the junction of anabolic and catabolic pathways. AcsA undergoes a two-step reaction. In the first half reaction, AcsA combines acetate with ATP to form acetyl-adenylate (AcAMP) intermediate. In the second half reaction, it can then transfer the acetyl group from AcAMP to the sulfhydryl group of CoA, forming the product AcCoA. This is Acetyl-coenzyme A synthetase 2 from Pseudomonas putida (strain ATCC 47054 / DSM 6125 / CFBP 8728 / NCIMB 11950 / KT2440).